A 240-amino-acid chain; its full sequence is Probable Ni/Fe-hydrogenase B-type cytochrome subunit (240 aa).

4 helical membrane-spanning segments follow: residues 31-51 (LWHW…YFIG), 75-95 (FAAG…AFVG), 142-163 (LAMF…FALY), and 196-213 (LGMW…YLAA).

The protein belongs to the HupC/HyaC/HydC family.

The protein resides in the cell membrane. Functionally, probable b-type cytochrome. This Azotobacter chroococcum mcd 1 protein is Probable Ni/Fe-hydrogenase B-type cytochrome subunit (hupZ).